Reading from the N-terminus, the 189-residue chain is uncharacterized protein (189 aa).

Residues 1-23 form the signal peptide; sequence MIKTTPHKIVILMGILLSPSVFA. The interval 104-125 is disordered; sequence SSPKLIIPQSGDSSSTTSNIGM. Positions 113 to 123 are enriched in polar residues; sequence SGDSSSTTSNI.

The protein belongs to the fimbrial protein family.

Its subcellular location is the fimbrium. Part of the yadCKLM-htrE-yadVN fimbrial operon. Could contribute to adhesion to various surfaces in specific environmental niches. This is an uncharacterized protein from Escherichia coli (strain K12).